The chain runs to 264 residues: MPSIFAYQSSEVDWCESNFQYSELVAEFYNTFSNIPFFIFGPLMMLLMHPYAQKRSRYIYVVWVLFMIIGLFSMYFHMTLSFLGQLLDEIAILWLLGSGYSIWMPRCYFPSFLGGNRSQFIRLVFITTVVSTLLSFLRPTVNAYALNSIALHILYIVCQEYRKTSNKELRHLIEVSVVLWAVALTSWISDRLLCSFWQRIHFFYLHSIWHVLISITFPYGMVTMALVDANYEMPGETLKVRYWPRDSWPVGLPYVEIRGDDKDC.

The Lumenal segment spans residues 1 to 27 (MPSIFAYQSSEVDWCESNFQYSELVAE). Ca(2+) is bound by residues Asp-13, Trp-14, Glu-16, Asn-18, and Glu-27. A helical membrane pass occupies residues 28–48 (FYNTFSNIPFFIFGPLMMLLM). Over 49–57 (HPYAQKRSR) the chain is Cytoplasmic. The helical transmembrane segment at 58–78 (YIYVVWVLFMIIGLFSMYFHM) threads the bilayer. Zn(2+) is bound at residue His-77. Residues 79 to 81 (TLS) are Lumenal-facing. A helical transmembrane segment spans residues 82–102 (FLGQLLDEIAILWLLGSGYSI). Residues 103–119 (WMPRCYFPSFLGGNRSQ) are Cytoplasmic-facing. A helical transmembrane segment spans residues 120–137 (FIRLVFITTVVSTLLSFL). Residue Arg-138 is a topological domain, lumenal. Residues 139 to 159 (PTVNAYALNSIALHILYIVCQ) traverse the membrane as a helical segment. Topologically, residues 160–176 (EYRKTSNKELRHLIEVS) are cytoplasmic. Residues 177 to 197 (VVLWAVALTSWISDRLLCSFW) form a helical membrane-spanning segment. The Lumenal portion of the chain corresponds to 198–206 (QRIHFFYLH). Positions 206 and 210 each coordinate Zn(2+). Residues 207–227 (SIWHVLISITFPYGMVTMALV) form a helical membrane-spanning segment. At 228 to 264 (DANYEMPGETLKVRYWPRDSWPVGLPYVEIRGDDKDC) the chain is on the cytoplasmic side.

This sequence belongs to the alkaline ceramidase family. Requires Zn(2+) as cofactor. As to expression, mainly expressed in epidermis.

The protein resides in the endoplasmic reticulum membrane. It carries out the reaction an N-acylsphing-4-enine + H2O = sphing-4-enine + a fatty acid. The enzyme catalyses N-tetracosanoyl-sphing-4-enine + H2O = tetracosanoate + sphing-4-enine. The catalysed reaction is an N-acylsphinganine + H2O = sphinganine + a fatty acid. It catalyses the reaction N-(9Z-octadecenoyl)-sphing-4-enine + H2O = sphing-4-enine + (9Z)-octadecenoate. It carries out the reaction N-(15Z-tetracosenoyl)-sphing-4-enine + H2O = (15Z)-tetracosenoate + sphing-4-enine. The protein operates within lipid metabolism; sphingolipid metabolism. Its activity is regulated as follows. Inhibited by sphingosine. Activity is Ca(2+)-dependent. Endoplasmic reticulum ceramidase that catalyzes the hydrolysis of ceramides into sphingosine and free fatty acids at alkaline pH. Ceramides, sphingosine, and its phosphorylated form sphingosine-1-phosphate are bioactive lipids that mediate cellular signaling pathways regulating several biological processes including cell proliferation, apoptosis and differentiation. Exhibits a strong substrate specificity towards the natural stereoisomer of ceramides with D-erythro-sphingosine as a backbone and has a higher activity towards very long-chain unsaturated fatty acids like the C24:1-ceramide. May also hydrolyze dihydroceramides to produce dihydrosphingosine. ACER1 is a skin-specific ceramidase that regulates the levels of ceramides, sphingosine and sphingosine-1-phosphate in the epidermis, mediates the calcium-induced differentiation of epidermal keratinocytes and more generally plays an important role in skin homeostasis. This is Alkaline ceramidase 1 from Homo sapiens (Human).